The sequence spans 249 residues: Aspartate/glutamate leucyltransferase (249 aa).

Belongs to the R-transferase family. Bpt subfamily.

Its subcellular location is the cytoplasm. It carries out the reaction N-terminal L-glutamyl-[protein] + L-leucyl-tRNA(Leu) = N-terminal L-leucyl-L-glutamyl-[protein] + tRNA(Leu) + H(+). It catalyses the reaction N-terminal L-aspartyl-[protein] + L-leucyl-tRNA(Leu) = N-terminal L-leucyl-L-aspartyl-[protein] + tRNA(Leu) + H(+). Functions in the N-end rule pathway of protein degradation where it conjugates Leu from its aminoacyl-tRNA to the N-termini of proteins containing an N-terminal aspartate or glutamate. This chain is Aspartate/glutamate leucyltransferase, found in Brucella abortus (strain 2308).